Here is a 315-residue protein sequence, read N- to C-terminus: Tubulin beta-1 chain (315 aa).

GTP-binding residues include S6, G10, T11, G12, N72, and N94. Positions 295–315 are disordered; the sequence is DATADEEEYYEDEEEEEAQGM. Residues 297–315 are compositionally biased toward acidic residues; the sequence is TADEEEYYEDEEEEEAQGM.

This sequence belongs to the tubulin family. In terms of assembly, dimer of alpha and beta chains. A typical microtubule is a hollow water-filled tube with an outer diameter of 25 nm and an inner diameter of 15 nM. Alpha-beta heterodimers associate head-to-tail to form protofilaments running lengthwise along the microtubule wall with the beta-tubulin subunit facing the microtubule plus end conferring a structural polarity. Microtubules usually have 13 protofilaments but different protofilament numbers can be found in some organisms and specialized cells. Requires Mg(2+) as cofactor.

The protein localises to the cytoplasm. It localises to the cytoskeleton. Its function is as follows. Tubulin is the major constituent of microtubules, a cylinder consisting of laterally associated linear protofilaments composed of alpha- and beta-tubulin heterodimers. Microtubules grow by the addition of GTP-tubulin dimers to the microtubule end, where a stabilizing cap forms. Below the cap, tubulin dimers are in GDP-bound state, owing to GTPase activity of alpha-tubulin. In Daucus carota (Wild carrot), this protein is Tubulin beta-1 chain (TUBB1).